The chain runs to 102 residues: NADH-quinone oxidoreductase subunit K (102 aa).

3 consecutive transmembrane segments (helical) span residues 5–25 (IMHYLIVSALMFTIGIAGIFL), 31–51 (IIILMSIELILLSVNLNFVAF), and 66–86 (FILTVAAAEAAIGLAILVVFF).

The protein belongs to the complex I subunit 4L family. In terms of assembly, NDH-1 is composed of 14 different subunits. Subunits NuoA, H, J, K, L, M, N constitute the membrane sector of the complex.

The protein localises to the cell inner membrane. It catalyses the reaction a quinone + NADH + 5 H(+)(in) = a quinol + NAD(+) + 4 H(+)(out). Functionally, NDH-1 shuttles electrons from NADH, via FMN and iron-sulfur (Fe-S) centers, to quinones in the respiratory chain. The immediate electron acceptor for the enzyme in this species is believed to be ubiquinone. Couples the redox reaction to proton translocation (for every two electrons transferred, four hydrogen ions are translocated across the cytoplasmic membrane), and thus conserves the redox energy in a proton gradient. This Bartonella henselae (strain ATCC 49882 / DSM 28221 / CCUG 30454 / Houston 1) (Rochalimaea henselae) protein is NADH-quinone oxidoreductase subunit K.